Consider the following 188-residue polypeptide: Adenine phosphoribosyltransferase (188 aa).

The protein belongs to the purine/pyrimidine phosphoribosyltransferase family. As to quaternary structure, homodimer.

The protein localises to the cytoplasm. The catalysed reaction is AMP + diphosphate = 5-phospho-alpha-D-ribose 1-diphosphate + adenine. The protein operates within purine metabolism; AMP biosynthesis via salvage pathway; AMP from adenine: step 1/1. In terms of biological role, catalyzes a salvage reaction resulting in the formation of AMP, that is energically less costly than de novo synthesis. The polypeptide is Adenine phosphoribosyltransferase (Burkholderia multivorans (strain ATCC 17616 / 249)).